Reading from the N-terminus, the 221-residue chain is uncharacterized protein (221 aa).

The Peptidase S8 domain occupies 1–189 (MDSGKDTNGY…NVVYCSEKAV (189 aa)).

This sequence belongs to the peptidase S8 family.

This is an uncharacterized protein from Aquifex aeolicus (strain VF5).